An 89-amino-acid chain; its full sequence is Small ribosomal subunit protein bS20 (89 aa).

The protein belongs to the bacterial ribosomal protein bS20 family.

Binds directly to 16S ribosomal RNA. The polypeptide is Small ribosomal subunit protein bS20 (Phenylobacterium zucineum (strain HLK1)).